The following is a 728-amino-acid chain: tRNA (guanine(27)-N(2))-dimethyltransferase (728 aa).

Positions 1 to 10 are enriched in acidic residues; the sequence is MENMAEEELL. Disordered stretches follow at residues 1–78 and 98–118; these read MENM…SKRH and DVDS…SQTC. Thr-23 carries the phosphothreonine modification. The segment covering 23-33 has biased composition (pro residues); the sequence is TPAPDSAPVPA. The segment covering 34–46 has biased composition (low complexity); sequence PAADTALDSAPTP. Residues 47–61 are compositionally biased toward pro residues; sequence DSDPAPALAPAPAPA. Ser-63 is modified (phosphoserine). Residues 101 to 118 are compositionally biased toward polar residues; the sequence is SASSLNSDNPGTENSQTC. A Nucleolar localization signal motif is present at residues 132–136; it reads HKLRR. The C2H2-type zinc finger occupies 181-203; sequence YHCIICSATITRRTDMLGHVKRH. In terms of domain architecture, Trm1 methyltransferase spans 224–683; sequence EILKETDTDI…APLMQFKSIL (460 aa). 4 residues coordinate S-adenosyl-L-methionine: Arg-257, Asp-304, Asp-352, and Ala-353. The Zn(2+) site is built by Cys-483, Cys-486, Cys-508, and Cys-510. Residue Lys-580 forms a Glycyl lysine isopeptide (Lys-Gly) (interchain with G-Cter in SUMO2) linkage. A Phosphoserine modification is found at Ser-607. The disordered stretch occupies residues 693–728; sequence GAQSEGQMPPAAEDTVTDRVEMSVSDKAEASGCRRW. Basic and acidic residues predominate over residues 708–721; that stretch reads VTDRVEMSVSDKAE.

It belongs to the class I-like SAM-binding methyltransferase superfamily. Trm1 family. In terms of tissue distribution, expressed in various neuronal structures during embryonic development, including spinal ganglia, trigeminal nerve and ganglion, olfactory and nasopharyngeal epithelium, nuclei of the metencephalon, thalamus and medulla oblongata. Also expressed in lung, esophagus, epiglottis, ependyma, vertebral column, spinal cord and brown adipose tissue. Expression persists in the adult brain with dynamically changing patterns in cortex and cerebellum.

It localises to the nucleus. It is found in the nucleolus. The catalysed reaction is guanosine(27) in tRNA(Tyr) + 2 S-adenosyl-L-methionine = N(2)-dimethylguanosine(27) in tRNA(Tyr) + 2 S-adenosyl-L-homocysteine + 2 H(+). Specifically dimethylates a single guanine residue at position 27 of tRNA(Tyr) using S-adenosyl-L-methionine as donor of the methyl groups. Dimethylation at position 27 of tRNA(Tyr) is required for efficient translation of tyrosine codons. Also required to maintain 3-(3-amino-3-carboxypropyl)uridine (acp3U) in the D-loop of several cytoplasmic tRNAs. May play a role in motor coordination and exploratory behavior. The chain is tRNA (guanine(27)-N(2))-dimethyltransferase from Mus musculus (Mouse).